The primary structure comprises 366 residues: Dihydroorotate dehydrogenase (quinone) (366 aa).

Residues 74 to 78 (AGFDK) and Thr-98 each bind FMN. Lys-78 is a substrate binding site. Residue 123 to 127 (NRMGF) participates in substrate binding. FMN contacts are provided by Asn-156 and Asn-189. Asn-189 contacts substrate. Ser-192 (nucleophile) is an active-site residue. Residue Asn-194 participates in substrate binding. Residues Lys-231 and Thr-259 each coordinate FMN. Substrate is bound at residue 260–261 (NT). Residues Gly-285, Gly-314, and 335–336 (YT) each bind FMN.

It belongs to the dihydroorotate dehydrogenase family. Type 2 subfamily. As to quaternary structure, monomer. Requires FMN as cofactor.

The protein resides in the cell membrane. It catalyses the reaction (S)-dihydroorotate + a quinone = orotate + a quinol. Its pathway is pyrimidine metabolism; UMP biosynthesis via de novo pathway; orotate from (S)-dihydroorotate (quinone route): step 1/1. Its function is as follows. Catalyzes the conversion of dihydroorotate to orotate with quinone as electron acceptor. The polypeptide is Dihydroorotate dehydrogenase (quinone) (Kineococcus radiotolerans (strain ATCC BAA-149 / DSM 14245 / SRS30216)).